Reading from the N-terminus, the 326-residue chain is Tetraacyldisaccharide 4'-kinase (326 aa).

55–62 (TAGGNGKT) is a binding site for ATP.

Belongs to the LpxK family.

It carries out the reaction a lipid A disaccharide + ATP = a lipid IVA + ADP + H(+). Its pathway is glycolipid biosynthesis; lipid IV(A) biosynthesis; lipid IV(A) from (3R)-3-hydroxytetradecanoyl-[acyl-carrier-protein] and UDP-N-acetyl-alpha-D-glucosamine: step 6/6. Transfers the gamma-phosphate of ATP to the 4'-position of a tetraacyldisaccharide 1-phosphate intermediate (termed DS-1-P) to form tetraacyldisaccharide 1,4'-bis-phosphate (lipid IVA). The chain is Tetraacyldisaccharide 4'-kinase from Klebsiella pneumoniae subsp. pneumoniae (strain ATCC 700721 / MGH 78578).